A 112-amino-acid polypeptide reads, in one-letter code: UPF0145 protein Acid_4599 (112 aa).

This sequence belongs to the UPF0145 family.

The chain is UPF0145 protein Acid_4599 from Solibacter usitatus (strain Ellin6076).